Consider the following 1012-residue polypeptide: Formate dehydrogenase 2 subunit alpha (cytochrome c-553) (1012 aa).

A signal peptide (tat-type signal) is located at residues 1–33 (MKTTRRSFLKLVGVSVVGLSLGQLGFDLEDAQA). The 57-residue stretch at 43–99 (AKEVGTVCPFCSVCCQVIAYVRNGKLVSTEGDPDFPVNEGALCAKGAALFSMYTNPH) folds into the 4Fe-4S Mo/W bis-MGD-type domain. The [4Fe-4S] cluster site is built by cysteine 50, cysteine 53, cysteine 57, and cysteine 85. Residue selenocysteine 189 coordinates W-bis(molybdopterin guanine dinucleotide). Residue selenocysteine 189 is a non-standard amino acid, selenocysteine. 5 residues coordinate Ca(2+): threonine 389, arginine 391, lysine 394, leucine 424, and asparagine 426.

It belongs to the prokaryotic molybdopterin-containing oxidoreductase family. Heterotrimer of cytochrome c3 FDH2C and formate dehydrogenase FDH2 alpha and beta subunits that forms the FdhABC(3) complex. It depends on [4Fe-4S] cluster as a cofactor. The cofactor is W-bis(molybdopterin guanine dinucleotide). Predicted to be exported by the Tat system. The position of the signal peptide cleavage has not been experimentally proven.

Its subcellular location is the periplasm. It catalyses the reaction 2 Fe(III)-[cytochrome c553] + formate = 2 Fe(II)-[cytochrome c553] + CO2 + H(+). Its function is as follows. Alpha chain of the formate dehydrogenase (FDH) that catalyzes the reversible two-electron oxidation of formate to carbon dioxide. The alpha subunit of formate dehydrogenase forms the active site. The protein is Formate dehydrogenase 2 subunit alpha (cytochrome c-553) of Nitratidesulfovibrio vulgaris (strain ATCC 29579 / DSM 644 / CCUG 34227 / NCIMB 8303 / VKM B-1760 / Hildenborough) (Desulfovibrio vulgaris).